Consider the following 218-residue polypeptide: Octanoyltransferase (218 aa).

The region spanning 31–206 (EETPDEVWLV…ELVNLLGYEQ (176 aa)) is the BPL/LPL catalytic domain. Substrate-binding positions include 70–77 (RGGQVTYH), 137–139 (SLG), and 150–152 (GLA). Catalysis depends on Cys168, which acts as the Acyl-thioester intermediate.

The protein belongs to the LipB family.

Its subcellular location is the cytoplasm. The enzyme catalyses octanoyl-[ACP] + L-lysyl-[protein] = N(6)-octanoyl-L-lysyl-[protein] + holo-[ACP] + H(+). Its pathway is protein modification; protein lipoylation via endogenous pathway; protein N(6)-(lipoyl)lysine from octanoyl-[acyl-carrier-protein]: step 1/2. Functionally, catalyzes the transfer of endogenously produced octanoic acid from octanoyl-acyl-carrier-protein onto the lipoyl domains of lipoate-dependent enzymes. Lipoyl-ACP can also act as a substrate although octanoyl-ACP is likely to be the physiological substrate. The chain is Octanoyltransferase from Vibrio vulnificus (strain YJ016).